The primary structure comprises 303 residues: Oxygen-dependent coproporphyrinogen-III oxidase (303 aa).

S93 serves as a coordination point for substrate. The a divalent metal cation site is built by H97 and H107. Residue H107 is the Proton donor of the active site. Residue 109-111 (NVR) coordinates substrate. Residues H146 and H176 each contribute to the a divalent metal cation site. Positions 241 to 276 (YVEFNLVYDRGTLFGLQSGGRTESILMSLPPQVRWG) are important for dimerization. 259–261 (GGR) provides a ligand contact to substrate.

This sequence belongs to the aerobic coproporphyrinogen-III oxidase family. Homodimer. The cofactor is a divalent metal cation.

It localises to the cytoplasm. The catalysed reaction is coproporphyrinogen III + O2 + 2 H(+) = protoporphyrinogen IX + 2 CO2 + 2 H2O. The protein operates within porphyrin-containing compound metabolism; protoporphyrin-IX biosynthesis; protoporphyrinogen-IX from coproporphyrinogen-III (O2 route): step 1/1. Its function is as follows. Involved in the heme biosynthesis. Catalyzes the aerobic oxidative decarboxylation of propionate groups of rings A and B of coproporphyrinogen-III to yield the vinyl groups in protoporphyrinogen-IX. The sequence is that of Oxygen-dependent coproporphyrinogen-III oxidase from Pseudomonas putida (strain W619).